The sequence spans 210 residues: Probable GTP-binding protein EngB (210 aa).

Positions 24–199 constitute an EngB-type G domain; that stretch reads QGCEVAFAGR…WEVLGRWLDL (176 aa). GTP contacts are provided by residues 32–39, 59–63, 77–80, 144–147, and 178–180; these read GRSNAGKS, GRTRM, DLPG, TKSD, and FSS. 2 residues coordinate Mg(2+): Ser-39 and Thr-61.

The protein belongs to the TRAFAC class TrmE-Era-EngA-EngB-Septin-like GTPase superfamily. EngB GTPase family. Mg(2+) serves as cofactor.

Its function is as follows. Necessary for normal cell division and for the maintenance of normal septation. This chain is Probable GTP-binding protein EngB, found in Methylococcus capsulatus (strain ATCC 33009 / NCIMB 11132 / Bath).